The primary structure comprises 822 residues: Fibroblast growth factor receptor 4 (822 aa).

An N-terminal signal peptide occupies residues 1–35 (MGVQKDSRDIRWNRTTRPLALLLCGLLAFSALSCA). 3 N-linked (GlcNAc...) asparagine glycosylation sites follow: Asn-13, Asn-72, and Asn-125. The Extracellular portion of the chain corresponds to 36-388 (RTLPEGRKAN…AEGPETRYTD (353 aa)). Ig-like C2-type domains are found at residues 39–129 (PEGR…FTIS), 157–259 (PPYS…YLLD), and 268–368 (PILQ…AWLT). A disulfide bridge connects residues Cys-69 and Cys-114. The disordered stretch occupies residues 136 to 166 (SGDDDDEDHGREDSAGDMGEDPPYSTSYRAP). Residues Cys-191 and Cys-243 are joined by a disulfide bond. Residues Asn-240, Asn-277, Asn-309, Asn-330, and Asn-341 are each glycosylated (N-linked (GlcNAc...) asparagine). An intrachain disulfide couples Cys-290 to Cys-352. Residues 389 to 409 (IIIYTSGSLALLMAAVIVVLC) traverse the membrane as a helical segment. Residues 410–822 (RMQLPPTKTH…HHTTTSMVGT (413 aa)) are Cytoplasmic-facing. Residues 486 to 774 (LVLGKPLGEG…ILATVAEEYL (289 aa)) form the Protein kinase domain. ATP is bound by residues 492 to 500 (LGEGCFGQV) and Lys-522. The Proton acceptor role is filled by Asp-631. 3 positions are modified to phosphotyrosine; by autocatalysis: Tyr-661, Tyr-662, and Tyr-773.

Belongs to the protein kinase superfamily. Tyr protein kinase family. Fibroblast growth factor receptor subfamily. Ubiquitinated. Subject to proteasomal degradation when not fully glycosylated. In terms of processing, autophosphorylated. Binding of FGF family members together with heparan sulfate proteoglycan or heparin promotes receptor dimerization and autophosphorylation on tyrosine residues. Autophosphorylation occurs in trans between the two FGFR molecules present in the dimer.

The protein localises to the cell membrane. Its subcellular location is the endosome. The protein resides in the endoplasmic reticulum. The catalysed reaction is L-tyrosyl-[protein] + ATP = O-phospho-L-tyrosyl-[protein] + ADP + H(+). Present in an inactive conformation in the absence of bound ligand. Ligand binding leads to dimerization and activation by autophosphorylation on tyrosine residues. Functionally, tyrosine-protein kinase that acts as a cell-surface receptor for fibroblast growth factors and plays a role in the regulation of cell proliferation, differentiation and migration, and in regulation of lipid metabolism, bile acid biosynthesis, glucose uptake, vitamin D metabolism and phosphate homeostasis. Required for normal down-regulation of the expression of CYP7A1, the rate-limiting enzyme in bile acid synthesis, in response to FGF19. Phosphorylates PLCG1 and FRS2. Ligand binding leads to the activation of several signaling cascades. Activation of PLCG1 leads to the production of the cellular signaling molecules diacylglycerol and inositol 1,4,5-trisphosphate. Phosphorylation of FRS2 triggers recruitment of GRB2, GAB1, PIK3R1 and SOS1, and mediates activation of RAS, MAPK1/ERK2, MAPK3/ERK1 and the MAP kinase signaling pathway, as well as of the AKT1 signaling pathway. The polypeptide is Fibroblast growth factor receptor 4 (FGFR4) (Pleurodeles waltl (Iberian ribbed newt)).